Reading from the N-terminus, the 345-residue chain is Microtubule-associated protein Jupiter (345 aa).

Over residues 1-14 the composition is skewed to polar residues; sequence MISNFDCTDNQASS. A disordered region spans residues 1–34; that stretch reads MISNFDCTDNQASSKVLRPPGGGSSDIFGSEMPQ. Ser24 bears the Phosphoserine mark. Thr35 is modified (phosphothreonine). The segment covering 78–87 has biased composition (basic and acidic residues); it reads QKTVDSHNRL. A disordered region spans residues 78–100; that stretch reads QKTVDSHNRLFGEPTRPITPGKN. A phosphothreonine mark is found at Thr92 and Thr96. Ser105, Ser134, and Ser145 each carry phosphoserine. Disordered regions lie at residues 127–241 and 300–345; these read HYNG…QPHS and EGNP…SGLW. A compositionally biased stretch (low complexity) spans 132 to 145; the sequence is SGSVSSASSSVSSS. Polar residues predominate over residues 146 to 164; the sequence is TENLKMNSGSRSVFRNMST. The segment covering 177 to 191 has biased composition (pro residues); that stretch reads LCPPSPVRIEPPTPP. Polar residues-rich tracts occupy residues 212–226 and 315–326; these read DNST…NEAC and DYNQRQESSNAG.

It belongs to the MAP Jupiter family.

It localises to the nucleus. The protein localises to the cytoplasm. It is found in the cytoskeleton. The protein resides in the spindle. Its function is as follows. Binds to all microtubule populations. This is Microtubule-associated protein Jupiter from Drosophila erecta (Fruit fly).